Reading from the N-terminus, the 1370-residue chain is DNA-directed RNA polymerase subunit beta (1370 aa).

It belongs to the RNA polymerase beta chain family. In terms of assembly, the RNAP catalytic core consists of 2 alpha, 1 beta, 1 beta' and 1 omega subunit. When a sigma factor is associated with the core the holoenzyme is formed, which can initiate transcription.

It catalyses the reaction RNA(n) + a ribonucleoside 5'-triphosphate = RNA(n+1) + diphosphate. DNA-dependent RNA polymerase catalyzes the transcription of DNA into RNA using the four ribonucleoside triphosphates as substrates. In Geobacter metallireducens (strain ATCC 53774 / DSM 7210 / GS-15), this protein is DNA-directed RNA polymerase subunit beta.